The primary structure comprises 90 residues: Early nodulin-36A (90 aa).

The polypeptide is Early nodulin-36A (Glycine max (Soybean)).